Here is a 459-residue protein sequence, read N- to C-terminus: uncharacterized protein (459 aa).

The protein belongs to the Rab GDI family.

Its subcellular location is the cytoplasm. It localises to the nucleus. This is an uncharacterized protein from Schizosaccharomyces pombe (strain 972 / ATCC 24843) (Fission yeast).